The primary structure comprises 138 residues: MRTLWILAVLLLGVKGNLLQFEMMINKMAGRSGIRWYSDYGCYCGKGGHGQPQDATDRCCFVHDCCYGKVSGCDPKMAFYKYSSDKNDIVCGGNNPCLKEICECDRAAAICFRDNLSTYDNKYWNVPSETCQVESEPC.

The first 16 residues, 1–16 (MRTLWILAVLLLGVKG), serve as a signal peptide directing secretion. Disulfide bonds link Cys-42-Cys-131, Cys-44-Cys-60, Cys-59-Cys-111, Cys-65-Cys-138, Cys-66-Cys-104, Cys-73-Cys-97, and Cys-91-Cys-102. Residues Tyr-43, Gly-45, and Gly-47 each contribute to the Ca(2+) site. The active site involves His-63. Asp-64 provides a ligand contact to Ca(2+). The active site involves Asp-105.

As to quaternary structure, monomer. Ca(2+) serves as cofactor. In terms of tissue distribution, expressed by the venom gland.

The protein localises to the secreted. The enzyme catalyses a 1,2-diacyl-sn-glycero-3-phosphocholine + H2O = a 1-acyl-sn-glycero-3-phosphocholine + a fatty acid + H(+). Its function is as follows. Snake venom phospholipase A2 (PLA2) that impairs hemostasis. It weakly inhibits ADP-induced platelet aggregation when tested on platelet rich plasma from human and rabbit blood (15-25% of inhibition at 5-10 ug of enzyme), and dose-dependently inhibits blood coagulation, possibly by inhibiting thrombin activation. Exhibits high hydrolytic activities toward L-dipalmitoyl phosphatidylcholine. PLA2 catalyzes the calcium-dependent hydrolysis of the 2-acyl groups in 3-sn-phosphoglycerides. The protein is Acidic phospholipase A2 Tbo-E6 of Craspedocephalus borneensis (Borneo pit viper).